Consider the following 468-residue polypeptide: MLAVGCALLAALLAAPGAALAPRRCPAQEVARGVLTSLPGDSVTLTCPGVEPEDNATVHWVLRKPAAGSHPSRWAGMGRRLLLRSVQLHDSGNYSCYRAGRPAGTVHLLVDVPPEEPQLSCFRKSPLSNVVCEWGPRSTPSLTTKAVLLVRKFQNSPAEDFQEPCQYSQESQKFSCQLAVPEGDSSFYIVSMCVASSVGSKFSKTQTFQGCGILQPDPPANITVTAVARNPRWLSVTWQDPHSWNSSFYRLRFELRYRAERSKTFTTWMVKDLQHHCVIHDAWSGLRHVVQLRAQEEFGQGEWSEWSPEAMGTPWTESRSPPAENEVSTPMQALTTNKDDDNILFRDSANATSLPVQDSSSVPLPTFLVAGGSLAFGTLLCIAIVLRFKKTWKLRALKEGKTSMHPPYSLGQLVPERPRPTPVLVPLISPPVSPSSLGSDNTSSHNRPDARDPRSPYDISNTDYFFPR.

A signal peptide spans 1–19; sequence MLAVGCALLAALLAAPGAA. Residues 20 to 365 are Extracellular-facing; sequence LAPRRCPAQE…VQDSSSVPLP (346 aa). 4 disulfides stabilise this stretch: cysteine 25-cysteine 193, cysteine 47-cysteine 96, cysteine 121-cysteine 132, and cysteine 165-cysteine 176. Positions 26–112 constitute an Ig-like C2-type domain; it reads PAQEVARGVL…AGTVHLLVDV (87 aa). Residues asparagine 55 and asparagine 93 are each glycosylated (N-linked (GlcNAc...) asparagine). Fibronectin type-III domains are found at residues 113-217 and 218-316; these read PPEE…LQPD and PPAN…TPWT. Residues asparagine 221 and asparagine 245 are each glycosylated (N-linked (GlcNAc...) asparagine). The short motif at 303–307 is the WSXWS motif element; that stretch reads WSEWS. The tract at residues 303 to 328 is disordered; that stretch reads WSEWSPEAMGTPWTESRSPPAENEVS. An N-linked (GlcNAc...) asparagine glycan is attached at asparagine 350. A glycan (O-linked (GlcNAc) threonine) is linked at threonine 352. Residues 366 to 386 form a helical membrane-spanning segment; it reads TFLVAGGSLAFGTLLCIAIVL. Topologically, residues 387–468 are cytoplasmic; sequence RFKKTWKLRA…ISNTDYFFPR (82 aa). A compositionally biased stretch (pro residues) spans 421-433; sequence TPVLVPLISPPVS. A disordered region spans residues 421 to 468; the sequence is TPVLVPLISPPVSPSSLGSDNTSSHNRPDARDPRSPYDISNTDYFFPR. A compositionally biased stretch (basic and acidic residues) spans 446-455; the sequence is NRPDARDPRS. Positions 458-468 are enriched in polar residues; that stretch reads DISNTDYFFPR.

Belongs to the type I cytokine receptor family. Type 3 subfamily. In terms of assembly, component of a hexamer of two molecules each of IL6, IL6R and IL6ST; first binds to IL6 to associate with the signaling subunit IL6ST. Interacts (via N-terminal ectodomain) with SORL1; this interaction may affect IL6-binding to IL6R, hence decrease IL6 'classic-signaling'. Also interacts with SORL1; this interaction leads to soluble IL6R internalization. May form a trimeric complex with the soluble SORL1 ectodomain and circulating IL6 receptor; this interaction might stabilize circulating IL6, hence promote IL6 'trans-signaling,. A short soluble form is released from the membrane by proteolysis. The sIL6R is formed mostly by limited proteolysis of membrane-bound receptors, a process referred to as ectodomain shedding, but is also directly secreted from the cells after alternative mRNA splicing. mIL6R is cleaved by the proteases ADAM10 and ADAM17. In terms of processing, glycosylated. Glycosylation is dispensable for transport, signaling, and cell-surface turnover. Glycosylation at Asn-55 is a protease-regulatory exosite. Glycosylation is required for ADAM17-mediated proteolysis. In terms of tissue distribution, expressed in peripheral blood mononuclear cells and weakly found in urine and serum. 1%-20% of the total sIL6R in plasma is generated by alternative splicing.

The protein resides in the cell membrane. Its subcellular location is the secreted. Its activity is regulated as follows. Classic and trans-signaling are both inhibited by tocilizumab, a humanized monoclonal antibody that blocks interleukin IL6R signaling. Its function is as follows. Part of the receptor for interleukin 6. Binds to IL6 with low affinity, but does not transduce a signal. Signal activation necessitate an association with IL6ST. Activation leads to the regulation of the immune response, acute-phase reactions and hematopoiesis. The interaction with membrane-bound IL6R and IL6ST stimulates 'classic signaling', the restricted expression of the IL6R limits classic IL6 signaling to only a few tissues such as the liver and some cells of the immune system. Whereas the binding of IL6 and soluble IL6R to IL6ST stimulates 'trans-signaling'. Alternatively, 'cluster signaling' occurs when membrane-bound IL6:IL6R complexes on transmitter cells activate IL6ST receptors on neighboring receiver cells. In terms of biological role, signaling via the membrane-bound IL6R is mostly regenerative and anti-inflammatory. Drives naive CD4(+) T cells to the Th17 lineage, through 'cluster signaling' by dendritic cells. Functionally, soluble form of IL6 receptor (sIL6R) that acts as an agonist of IL6 activity. The IL6:sIL6R complex (hyper-IL6) binds to IL6ST/gp130 on cell surfaces and induces signaling also on cells that do not express membrane-bound IL6R in a process called IL6 'trans-signaling'. sIL6R is causative for the pro-inflammatory properties of IL6 and an important player in the development of chronic inflammatory diseases. In complex with IL6, is required for induction of VEGF production. Plays a protective role during liver injury, being required for maintenance of tissue regeneration. 'Trans-signaling' in central nervous system regulates energy and glucose homeostasis. In Homo sapiens (Human), this protein is Interleukin-6 receptor subunit alpha.